The sequence spans 328 residues: DNA-directed RNA polymerase subunit alpha (328 aa).

Positions 1–234 (MQGSVTEFLK…EQLDAFVDLR (234 aa)) are alpha N-terminal domain (alpha-NTD). The tract at residues 248–328 (FDPILLRPVD…NWPPASIAED (81 aa)) is alpha C-terminal domain (alpha-CTD).

Belongs to the RNA polymerase alpha chain family. In terms of assembly, homodimer. The RNAP catalytic core consists of 2 alpha, 1 beta, 1 beta' and 1 omega subunit. When a sigma factor is associated with the core the holoenzyme is formed, which can initiate transcription.

It carries out the reaction RNA(n) + a ribonucleoside 5'-triphosphate = RNA(n+1) + diphosphate. Functionally, DNA-dependent RNA polymerase catalyzes the transcription of DNA into RNA using the four ribonucleoside triphosphates as substrates. This chain is DNA-directed RNA polymerase subunit alpha, found in Haemophilus influenzae (strain PittEE).